The sequence spans 427 residues: Inward rectifier potassium channel 2 (427 aa).

The Cytoplasmic segment spans residues 1–81; it reads MGSVRTNRYS…IFTTCVDIRW (81 aa). S-nitrosocysteine is present on cysteine 76. A helical transmembrane segment spans residues 82 to 106; the sequence is RWMLVIFCLAFVLSWLFFGCVFWLI. Topologically, residues 107–128 are extracellular; sequence ALLHGDLDASKESKACVSEVNS. The segment at residues 129–140 is an intramembrane region (helical; Pore-forming); it reads FTAAFLFSIETQ. An intramembrane region (pore-forming) is located at residues 141–147; the sequence is TTIGYGF. Positions 142–147 match the Selectivity filter motif; that stretch reads TIGYGF. Over 148–156 the chain is Extracellular; the sequence is RCVTDECPV. Residues 157–178 traverse the membrane as a helical segment; sequence AVFMVVFQSIVGCIIDAFIIGA. Topologically, residues 179–427 are cytoplasmic; the sequence is VMAKMAKPKK…PRPLRRESEI (249 aa). Residues 181–208 are polyphosphoinositide (PIP2)-binding; it reads AKMAKPKKRNETLVFSHNAVIAMRDGKL. The interval 384-427 is disordered; the sequence is SKEEDDSENGVPESTSTDTPPDIDLHNQASVPLEPRPLRRESEI. Positions 425–427 match the PDZ-binding motif; sequence SEI.

This sequence belongs to the inward rectifier-type potassium channel (TC 1.A.2.1) family. KCNJ2 subfamily. As to quaternary structure, homotetramer. Homomultimeric and heteromultimeric association with KCNJ4/Kir2.3. Can form heteromeric channels with Kir2.6/KCNJ18. Associates, via its PDZ-recognition domain, with a complex containing LIN7A, LIN7B, LIN7C, DLG1, CASK and APBA1. Post-translationally, S-nitrosylation increases the open probability and inward rectifying currents.

It localises to the cell membrane. It is found in the sarcolemma. The protein resides in the T-tubule. It catalyses the reaction K(+)(in) = K(+)(out). With respect to regulation, activated by phosphatidylinositol 4,5 biphosphate (PtdIns(4,5)P2). In terms of biological role, inward rectifier potassium channels are characterized by a greater tendency to allow potassium to flow into the cell rather than out of it. Their voltage dependence is regulated by the concentration of extracellular potassium; as external potassium is raised, the voltage range of the channel opening shifts to more positive voltages. The inward rectification is mainly due to the blockage of outward current by internal magnesium. Can be blocked by extracellular barium and cesium. Probably participates in establishing action potential waveform and excitability of neuronal and muscle tissues. In Bos taurus (Bovine), this protein is Inward rectifier potassium channel 2 (KCNJ2).